We begin with the raw amino-acid sequence, 105 residues long: MDFDINNLMQQAQAMQEKMKKMQDEAANAEVVGESGAGLVKVTMNGRHDVKGVDIDPSLMSEDKELLEDLLAAAVNDAVRRIEKQQQDSMQNMAGGFPFPPGFKP.

A disordered region spans residues 85 to 105 (QQQDSMQNMAGGFPFPPGFKP).

This sequence belongs to the YbaB/EbfC family. In terms of assembly, homodimer.

It is found in the cytoplasm. The protein resides in the nucleoid. Binds to DNA and alters its conformation. May be involved in regulation of gene expression, nucleoid organization and DNA protection. In Alcanivorax borkumensis (strain ATCC 700651 / DSM 11573 / NCIMB 13689 / SK2), this protein is Nucleoid-associated protein ABO_1774.